The chain runs to 272 residues: Ribonuclease HII (272 aa).

In terms of domain architecture, RNase H type-2 spans 87-272 (KYVAGVDEVG…HRMSFLKNIL (186 aa)). A divalent metal cation contacts are provided by aspartate 93, glutamate 94, and aspartate 188.

It belongs to the RNase HII family. Requires Mn(2+) as cofactor. The cofactor is Mg(2+).

Its subcellular location is the cytoplasm. The enzyme catalyses Endonucleolytic cleavage to 5'-phosphomonoester.. Its function is as follows. Endonuclease that specifically degrades the RNA of RNA-DNA hybrids. In Clostridium perfringens (strain ATCC 13124 / DSM 756 / JCM 1290 / NCIMB 6125 / NCTC 8237 / Type A), this protein is Ribonuclease HII.